The following is a 404-amino-acid chain: uncharacterized protein (404 aa).

This is an uncharacterized protein from Mycoplasma genitalium (strain ATCC 33530 / DSM 19775 / NCTC 10195 / G37) (Mycoplasmoides genitalium).